The chain runs to 346 residues: NADH-ubiquinone oxidoreductase chain 2 (346 aa).

11 helical membrane passes run 1–21 (MNPH…TITI), 25–45 (HWVL…PLIS), 60–80 (FLTQ…NAWA), 95–115 (CLLL…HFWF), 124–144 (LMTA…LLLM), 149–169 (LNPA…GWMG), 178–195 (ILAF…IILV), 200–219 (LALL…FMAL), 242–262 (ATLM…GFMP), 274–294 (EMTP…FFYL), and 326–346 (AILA…HAIV).

This sequence belongs to the complex I subunit 2 family.

It is found in the mitochondrion inner membrane. It catalyses the reaction a ubiquinone + NADH + 5 H(+)(in) = a ubiquinol + NAD(+) + 4 H(+)(out). In terms of biological role, core subunit of the mitochondrial membrane respiratory chain NADH dehydrogenase (Complex I) that is believed to belong to the minimal assembly required for catalysis. Complex I functions in the transfer of electrons from NADH to the respiratory chain. The immediate electron acceptor for the enzyme is believed to be ubiquinone. This Mareca falcata (Falcated duck) protein is NADH-ubiquinone oxidoreductase chain 2 (MT-ND2).